A 165-amino-acid polypeptide reads, in one-letter code: Short form salivary protein D7R4 (165 aa).

Positions 1 to 21 (MIRQVITSYFLTVCLLALVQG) are cleaved as a signal peptide. 3 cysteine pairs are disulfide-bonded: C27–C59, C40–C165, and C98–C117. 2 residues coordinate noradrenaline: E28 and R43. E28 contributes to the serotonin binding site. Residues H56, Y115, D132, and E135 each coordinate serotonin. The histamine site is built by Y115, D132, and E135. Y115, D132, and E135 together coordinate tryptamine. The noradrenaline site is built by D132 and E135.

The protein belongs to the PBP/GOBP family. Female saliva (at protein level). Female salivary gland. Not detected in female carcass without salivary glands. Not detected in male tissues.

Its subcellular location is the secreted. Its function is as follows. Modulates blood feeding of female mosquitoes on vertebrate species by binding and sequestering different mediators involved in the host response. Binds serotonin, noradrenaline, histamine and tryptamine. Inhibits histamine-, serotonin- and partially noradrenaline-induced smooth muscle contraction. Exhibits vasodilating activity. The chain is Short form salivary protein D7R4 from Anopheles gambiae (African malaria mosquito).